Here is a 27-residue protein sequence, read N- to C-terminus: Pregnancy-associated glycoprotein 55 (27 aa).

This sequence belongs to the peptidase A1 family. Glycosylated. As to expression, placenta.

The protein is Pregnancy-associated glycoprotein 55 (PAG55) of Capra hircus (Goat).